The primary structure comprises 1070 residues: Carbamoyl phosphate synthase large chain (1070 aa).

Positions 1–401 are carboxyphosphate synthetic domain; that stretch reads MPKRDDIKTI…ALLKAVRSLE (401 aa). ATP-binding residues include arginine 129, arginine 169, glycine 175, glycine 176, lysine 208, isoleucine 210, glutamate 215, glycine 241, isoleucine 242, histidine 243, glutamine 284, and glutamate 298. Positions 133–327 constitute an ATP-grasp 1 domain; sequence RDLMNELGEP…IAKLAAKIAV (195 aa). Mg(2+)-binding residues include glutamine 284, glutamate 298, and asparagine 300. Residues glutamine 284, glutamate 298, and asparagine 300 each contribute to the Mn(2+) site. The interval 402-546 is oligomerization domain; it reads IGADHLLLEE…YSTYEEENES (145 aa). Positions 547 to 929 are carbamoyl phosphate synthetic domain; it reads TRSAKESVIV…ALYKGFVASG (383 aa). One can recognise an ATP-grasp 2 domain in the interval 671 to 861; that stretch reads EKALGILQIP…MANVATRVIL (191 aa). Residues arginine 707, arginine 746, valine 748, glutamate 752, glycine 777, valine 778, histidine 779, serine 780, glutamine 820, and glutamate 832 each contribute to the ATP site. Mg(2+) contacts are provided by glutamine 820, glutamate 832, and asparagine 834. 3 residues coordinate Mn(2+): glutamine 820, glutamate 832, and asparagine 834. The region spanning 930–1070 is the MGS-like domain; it reads TTMHDYGTVL…SEVKQPKARV (141 aa). The tract at residues 930 to 1070 is allosteric domain; the sequence is TTMHDYGTVL…SEVKQPKARV (141 aa).

The protein belongs to the CarB family. Composed of two chains; the small (or glutamine) chain promotes the hydrolysis of glutamine to ammonia, which is used by the large (or ammonia) chain to synthesize carbamoyl phosphate. Tetramer of heterodimers (alpha,beta)4. Mg(2+) serves as cofactor. It depends on Mn(2+) as a cofactor.

The enzyme catalyses hydrogencarbonate + L-glutamine + 2 ATP + H2O = carbamoyl phosphate + L-glutamate + 2 ADP + phosphate + 2 H(+). It carries out the reaction hydrogencarbonate + NH4(+) + 2 ATP = carbamoyl phosphate + 2 ADP + phosphate + 2 H(+). The protein operates within amino-acid biosynthesis; L-arginine biosynthesis; carbamoyl phosphate from bicarbonate: step 1/1. It functions in the pathway pyrimidine metabolism; UMP biosynthesis via de novo pathway; (S)-dihydroorotate from bicarbonate: step 1/3. Its function is as follows. Large subunit of the glutamine-dependent carbamoyl phosphate synthetase (CPSase). CPSase catalyzes the formation of carbamoyl phosphate from the ammonia moiety of glutamine, carbonate, and phosphate donated by ATP, constituting the first step of 2 biosynthetic pathways, one leading to arginine and/or urea and the other to pyrimidine nucleotides. The large subunit (synthetase) binds the substrates ammonia (free or transferred from glutamine from the small subunit), hydrogencarbonate and ATP and carries out an ATP-coupled ligase reaction, activating hydrogencarbonate by forming carboxy phosphate which reacts with ammonia to form carbamoyl phosphate. The polypeptide is Carbamoyl phosphate synthase large chain (Listeria monocytogenes serotype 4b (strain CLIP80459)).